The chain runs to 155 residues: Interleukin-2 (155 aa).

A signal peptide spans 1–20; sequence MYKIQLLSCIALTLALVANG. A glycan (O-linked (GalNAc...) threonine) is linked at threonine 23. Cysteine 79 and cysteine 127 are oxidised to a cystine.

This sequence belongs to the IL-2 family.

Its subcellular location is the secreted. In terms of biological role, cytokine produced by activated CD4-positive helper T-cells and to a lesser extend activated CD8-positive T-cells and natural killer (NK) cells that plays pivotal roles in the immune response and tolerance. Binds to a receptor complex composed of either the high-affinity trimeric IL-2R (IL2RA/CD25, IL2RB/CD122 and IL2RG/CD132) or the low-affinity dimeric IL-2R (IL2RB and IL2RG). Interaction with the receptor leads to oligomerization and conformation changes in the IL-2R subunits resulting in downstream signaling starting with phosphorylation of JAK1 and JAK3. In turn, JAK1 and JAK3 phosphorylate the receptor to form a docking site leading to the phosphorylation of several substrates including STAT5. This process leads to activation of several pathways including STAT, phosphoinositide-3-kinase/PI3K and mitogen-activated protein kinase/MAPK pathways. Functions as a T-cell growth factor and can increase NK-cell cytolytic activity as well. Promotes strong proliferation of activated B-cells and subsequently immunoglobulin production. Plays a pivotal role in regulating the adaptive immune system by controlling the survival and proliferation of regulatory T-cells, which are required for the maintenance of immune tolerance. Moreover, participates in the differentiation and homeostasis of effector T-cell subsets, including Th1, Th2, Th17 as well as memory CD8-positive T-cells. The protein is Interleukin-2 (IL2) of Ovis aries (Sheep).